A 340-amino-acid polypeptide reads, in one-letter code: DNA-directed RNA polymerase subunit alpha (340 aa).

Positions 1–237 (MSSDELVYMN…EQMNPFINFD (237 aa)) are alpha N-terminal domain (alpha-NTD). The alpha C-terminal domain (alpha-CTD) stretch occupies residues 256–340 (FNENLYRSVD…PEEDQIKEGE (85 aa)).

It belongs to the RNA polymerase alpha chain family. Homodimer. The RNAP catalytic core consists of 2 alpha, 1 beta, 1 beta' and 1 omega subunit. When a sigma factor is associated with the core the holoenzyme is formed, which can initiate transcription.

The enzyme catalyses RNA(n) + a ribonucleoside 5'-triphosphate = RNA(n+1) + diphosphate. Functionally, DNA-dependent RNA polymerase catalyzes the transcription of DNA into RNA using the four ribonucleoside triphosphates as substrates. This Desulforapulum autotrophicum (strain ATCC 43914 / DSM 3382 / VKM B-1955 / HRM2) (Desulfobacterium autotrophicum) protein is DNA-directed RNA polymerase subunit alpha.